The chain runs to 642 residues: Threonine--tRNA ligase (642 aa).

The TGS domain maps to 1–61 (MPVITLPDGS…ENDAQLSIIT (61 aa)). Residues 243 to 534 (DHRKIGKQLD…LTEEFAGFFP (292 aa)) form a catalytic region. Zn(2+)-binding residues include cysteine 334, histidine 385, and histidine 511.

The protein belongs to the class-II aminoacyl-tRNA synthetase family. Homodimer. The cofactor is Zn(2+).

It localises to the cytoplasm. The enzyme catalyses tRNA(Thr) + L-threonine + ATP = L-threonyl-tRNA(Thr) + AMP + diphosphate + H(+). Functionally, catalyzes the attachment of threonine to tRNA(Thr) in a two-step reaction: L-threonine is first activated by ATP to form Thr-AMP and then transferred to the acceptor end of tRNA(Thr). Also edits incorrectly charged L-seryl-tRNA(Thr). This is Threonine--tRNA ligase from Enterobacter sp. (strain 638).